We begin with the raw amino-acid sequence, 473 residues long: Protein TED1 (473 aa).

Topologically, residues 1 to 8 (MLRCAVKK) are cytoplasmic. A helical membrane pass occupies residues 9 to 29 (FAYFATFLTIVANIYIYTYPS). At 30-451 (FHPEQCSWNC…FSLCPFAIQH (422 aa)) the chain is on the lumenal side. N-linked (GlcNAc...) asparagine glycosylation is found at Asn38, Asn147, Asn229, Asn266, and Asn307. Residues 452-472 (VWWFAKVSLLVTIFTWSSLLF) form a helical membrane-spanning segment. A topological domain (cytoplasmic) is located at residue Val473.

N-glycosylated.

Its subcellular location is the endoplasmic reticulum membrane. In terms of biological role, acts together with EMP24 and ERV25 in cargo exit from the endoplasmic reticulum. This Saccharomyces cerevisiae (strain ATCC 204508 / S288c) (Baker's yeast) protein is Protein TED1 (TED1).